The following is a 598-amino-acid chain: Fumarate reductase flavoprotein subunit (598 aa).

Residues 12-16 (GAGGA), 36-38 (ISK), 44-52 (SHTVAAEGG), 156-158 (HFV), and Asp-212 contribute to the FAD site. His-45 is subject to Tele-8alpha-FAD histidine. Active-site residues include His-233 and Arg-249. FAD contacts are provided by residues 356-357 (HY), Glu-380, and 391-397 (RLGSNSL). Positions 577 to 598 (AKRVYGGEADAQEKSDKEQANG) are disordered. Positions 587–598 (AQEKSDKEQANG) are enriched in basic and acidic residues.

This sequence belongs to the FAD-dependent oxidoreductase 2 family. FRD/SDH subfamily. Part of an enzyme complex containing four subunits: a flavoprotein (FrdA), an iron-sulfur protein (FrdB), and two hydrophobic anchor proteins (FrdC and FrdD). Interacts with SdhE. The cofactor is FAD.

It is found in the cell inner membrane. It catalyses the reaction a quinone + succinate = fumarate + a quinol. The catalysed reaction is a menaquinone + succinate = a menaquinol + fumarate. Two distinct, membrane-bound, FAD-containing enzymes are responsible for the catalysis of fumarate and succinate interconversion; the fumarate reductase is used in anaerobic growth, and the succinate dehydrogenase is used in aerobic growth. The polypeptide is Fumarate reductase flavoprotein subunit (Serratia sp. (strain ATCC 39006) (Prodigiosinella confusarubida)).